The following is a 227-amino-acid chain: MTIGRTLRAGVLALQGDVREHLAALEACGAEAVPIRRASELADLDGLVLPGGESTAIDRLIRAFELSEPLKAFIASGKPVYGSCSGMILLADRIADPALDRDGAPQRTLGGLDVTVRRNAFGRQRDSFETELKFDSLSDSERPVHAVFIRAPWIEQAGSEVEVLAVVRIEGIDRAVAVRSGNLLATSFHPEVLVQESETSELRVHELLVSMMASRLSQDANQAESRK.

Glycine 52 to serine 54 lines the L-glutamine pocket. Catalysis depends on cysteine 84, which acts as the Nucleophile. Residues arginine 118 and isoleucine 149–arginine 150 contribute to the L-glutamine site. Residues histidine 189 and glutamate 191 each act as charge relay system in the active site.

The protein belongs to the glutaminase PdxT/SNO family. In the presence of PdxS, forms a dodecamer of heterodimers. Only shows activity in the heterodimer.

It carries out the reaction aldehydo-D-ribose 5-phosphate + D-glyceraldehyde 3-phosphate + L-glutamine = pyridoxal 5'-phosphate + L-glutamate + phosphate + 3 H2O + H(+). It catalyses the reaction L-glutamine + H2O = L-glutamate + NH4(+). The protein operates within cofactor biosynthesis; pyridoxal 5'-phosphate biosynthesis. Its function is as follows. Catalyzes the hydrolysis of glutamine to glutamate and ammonia as part of the biosynthesis of pyridoxal 5'-phosphate. The resulting ammonia molecule is channeled to the active site of PdxS. This chain is Pyridoxal 5'-phosphate synthase subunit PdxT, found in Renibacterium salmoninarum (strain ATCC 33209 / DSM 20767 / JCM 11484 / NBRC 15589 / NCIMB 2235).